Consider the following 727-residue polypeptide: DNA topoisomerase 3 (727 aa).

The 134-residue stretch at 3 to 136 (KTVVLAEKPS…LKRLWISSVT (134 aa)) folds into the Toprim domain. Mg(2+) is bound by residues Glu9 and Asp105. A Topo IA-type catalytic domain is found at 153-592 (FENLYHSAVA…EMKEYAKQTI (440 aa)). The interaction with DNA stretch occupies residues 187–192 (SCGRVQ). Tyr310 acts as the O-(5'-phospho-DNA)-tyrosine intermediate in catalysis. Residues 685–711 (RRAKDKNSKASKRDVHSYMKKQNKDEP) are compositionally biased toward basic and acidic residues. The segment at 685–713 (RRAKDKNSKASKRDVHSYMKKQNKDEPIN) is disordered.

This sequence belongs to the type IA topoisomerase family. It depends on Mg(2+) as a cofactor.

It catalyses the reaction ATP-independent breakage of single-stranded DNA, followed by passage and rejoining.. Functionally, releases the supercoiling and torsional tension of DNA, which is introduced during the DNA replication and transcription, by transiently cleaving and rejoining one strand of the DNA duplex. Introduces a single-strand break via transesterification at a target site in duplex DNA. The scissile phosphodiester is attacked by the catalytic tyrosine of the enzyme, resulting in the formation of a DNA-(5'-phosphotyrosyl)-enzyme intermediate and the expulsion of a 3'-OH DNA strand. The free DNA strand then undergoes passage around the unbroken strand, thus removing DNA supercoils. Finally, in the religation step, the DNA 3'-OH attacks the covalent intermediate to expel the active-site tyrosine and restore the DNA phosphodiester backbone. The polypeptide is DNA topoisomerase 3 (Bacillus licheniformis (strain ATCC 14580 / DSM 13 / JCM 2505 / CCUG 7422 / NBRC 12200 / NCIMB 9375 / NCTC 10341 / NRRL NRS-1264 / Gibson 46)).